We begin with the raw amino-acid sequence, 2326 residues long: Telomere-associated protein RIF1 (2326 aa).

3 disordered regions span residues 381–410 (QGTPSRVPSNPNSANPPQKPGPYPFASPAT), 1105–1965 (YTQS…CITP), and 1993–2050 (VENK…DDSL). The segment covering 382–396 (GTPSRVPSNPNSANP) has biased composition (polar residues). 2 stretches are compositionally biased toward basic and acidic residues: residues 1112–1126 (SLEKSPLENAKEDFK) and 1150–1182 (CKVDNPLEDVKEKSAYHIEKNSNSEEESSRGDR). Residues 1216–1225 (SAISCSSTSS) show a composition bias toward low complexity. 2 stretches are compositionally biased toward polar residues: residues 1233 to 1242 (QPASRRQSFI) and 1252 to 1270 (SRPFSPSALNSVSEVSQSA). The span at 1290-1299 (KSGEESRKSS) shows a compositional bias: basic and acidic residues. 2 stretches are compositionally biased toward polar residues: residues 1318–1332 (MEQQGNQQAKLVTNS) and 1341–1353 (SFVSNSVENSPES). The span at 1376–1402 (PDIKKAEAVMAEIEKVRAFEMDSKENT) shows a compositional bias: basic and acidic residues. The span at 1403–1412 (PPKTAVSSEQ) shows a compositional bias: polar residues. Basic and acidic residues-rich tracts occupy residues 1448–1480 (QDKEDGYQKKDKRKEDEKALQKKVPQTKEDASQ), 1489–1511 (ASEHAIKKESSLPERSAAEDLGS), and 1519–1539 (GADEEANRSAGKPEDTLKSDS). The span at 1564-1573 (SSQGLLSSIE) shows a compositional bias: polar residues. Residues 1586 to 1595 (SLKKKSGKTK) show a composition bias toward basic residues. The segment covering 1596–1609 (NKSDSLEGKRKDVQ) has biased composition (basic and acidic residues). 2 stretches are compositionally biased toward polar residues: residues 1610–1640 (PESQSHGVSSQVDESKNLSGMNESELSSEVS) and 1671–1683 (RTSPSTQNVSVEQ). The segment covering 1697–1712 (RVSDEVLKGDENKCIE) has biased composition (basic and acidic residues). Residues 1713–1745 (KQSSVEQHSSVQPENVQGANTSGSDLSSLQMQD) are compositionally biased toward polar residues. Residues 1776–1785 (SKSEDPRELI) are compositionally biased toward basic and acidic residues. The segment covering 1795-1813 (AVSTAEVSGSSNLEESLSI) has biased composition (polar residues). Basic and acidic residues-rich tracts occupy residues 1869 to 1884 (VEIKVKEEVDGNDRAE), 1908 to 1925 (SEEKAAVEKEEESQHGEM), and 1932 to 1954 (DGSKPETKQMDELEGNRDGKEEA). The span at 2009–2036 (SFTSVNGSPSGVQARCTWSPSASPSTSI) shows a compositional bias: polar residues.

It belongs to the RIF1 family. Interacts with TP53BP1 (when phosphorylated by ATM).

Its subcellular location is the nucleus. It localises to the chromosome. The protein resides in the telomere. The protein localises to the cytoplasm. It is found in the cytoskeleton. Its subcellular location is the spindle. Functionally, key regulator of TP53BP1 that plays a key role in the repair of double-strand DNA breaks (DSBs) in response to DNA damage: acts by promoting non-homologous end joining (NHEJ)-mediated repair of DSBs. In response to DNA damage, interacts with ATM-phosphorylated TP53BP1, allowing recruitment to DNA DSBs. Once recruited to DSBs, RIF1 and TP53BP1 act by promoting NHEJ-mediated repair of DSBs. In the same time, RIF1 and TP53BP1 specifically counteract DSBs resection via homologous recombination (HR) during G1 phase. This Gallus gallus (Chicken) protein is Telomere-associated protein RIF1.